The chain runs to 247 residues: Adenosylcobinamide-GDP ribazoletransferase (247 aa).

5 consecutive transmembrane segments (helical) span residues 1–21 (MLRLYFVALQFLAIIPIPFSF), 37–57 (LVGLTLGLLLAGCDYLLALAL), 61–81 (VADLLLVAILALVTGALHLDG), 109–129 (AVGVVGLVLALLLKYQALFAV), and 176–196 (VAVAAFFTVVTGWLLLGLPGI).

This sequence belongs to the CobS family. Mg(2+) is required as a cofactor.

The protein resides in the cell inner membrane. It catalyses the reaction alpha-ribazole + adenosylcob(III)inamide-GDP = adenosylcob(III)alamin + GMP + H(+). It carries out the reaction alpha-ribazole 5'-phosphate + adenosylcob(III)inamide-GDP = adenosylcob(III)alamin 5'-phosphate + GMP + H(+). It functions in the pathway cofactor biosynthesis; adenosylcobalamin biosynthesis; adenosylcobalamin from cob(II)yrinate a,c-diamide: step 7/7. Joins adenosylcobinamide-GDP and alpha-ribazole to generate adenosylcobalamin (Ado-cobalamin). Also synthesizes adenosylcobalamin 5'-phosphate from adenosylcobinamide-GDP and alpha-ribazole 5'-phosphate. This chain is Adenosylcobinamide-GDP ribazoletransferase, found in Geotalea daltonii (strain DSM 22248 / JCM 15807 / FRC-32) (Geobacter daltonii).